Reading from the N-terminus, the 189-residue chain is Elongation factor P (189 aa).

An N6-(3,6-diaminohexanoyl)-5-hydroxylysine modification is found at lysine 34.

The protein belongs to the elongation factor P family. In terms of processing, may be beta-lysylated on the epsilon-amino group of Lys-34 by the combined action of EpmA and EpmB, and then hydroxylated on the C5 position of the same residue by EpmC (if this protein is present). Lysylation is critical for the stimulatory effect of EF-P on peptide-bond formation. The lysylation moiety may extend toward the peptidyltransferase center and stabilize the terminal 3-CCA end of the tRNA. Hydroxylation of the C5 position on Lys-34 may allow additional potential stabilizing hydrogen-bond interactions with the P-tRNA.

The protein localises to the cytoplasm. It participates in protein biosynthesis; polypeptide chain elongation. Involved in peptide bond synthesis. Alleviates ribosome stalling that occurs when 3 or more consecutive Pro residues or the sequence PPG is present in a protein, possibly by augmenting the peptidyl transferase activity of the ribosome. Modification of Lys-34 is required for alleviation. This Buchnera aphidicola subsp. Acyrthosiphon pisum (strain APS) (Acyrthosiphon pisum symbiotic bacterium) protein is Elongation factor P.